The following is a 260-amino-acid chain: Phosphonates import ATP-binding protein PhnC 2 (260 aa).

An ABC transporter domain is found at 4–245 (IQINKATKTY…KNTLRTIYQR (242 aa)). ATP is bound at residue 37-44 (GPSGAGKS).

It belongs to the ABC transporter superfamily. Phosphonates importer (TC 3.A.1.9.1) family. The complex is composed of two ATP-binding proteins (PhnC), two transmembrane proteins (PhnE) and a solute-binding protein (PhnD).

It localises to the cell inner membrane. It carries out the reaction phosphonate(out) + ATP + H2O = phosphonate(in) + ADP + phosphate + H(+). In terms of biological role, part of the ABC transporter complex PhnCDE involved in phosphonates import. Responsible for energy coupling to the transport system. This Trichodesmium erythraeum (strain IMS101) protein is Phosphonates import ATP-binding protein PhnC 2.